The primary structure comprises 92 residues: Small ribosomal subunit protein uS19c (92 aa).

Belongs to the universal ribosomal protein uS19 family.

Its subcellular location is the plastid. It localises to the chloroplast. Its function is as follows. Protein S19 forms a complex with S13 that binds strongly to the 16S ribosomal RNA. The polypeptide is Small ribosomal subunit protein uS19c (Illicium oligandrum (Star anise)).